The sequence spans 328 residues: 4-hydroxy-3-methylbut-2-enyl diphosphate reductase (328 aa).

Cysteine 13 is a [4Fe-4S] cluster binding site. 2 residues coordinate (2E)-4-hydroxy-3-methylbut-2-enyl diphosphate: histidine 41 and histidine 75. Positions 41 and 75 each coordinate dimethylallyl diphosphate. Isopentenyl diphosphate contacts are provided by histidine 41 and histidine 75. Cysteine 97 is a binding site for [4Fe-4S] cluster. Residue histidine 125 participates in (2E)-4-hydroxy-3-methylbut-2-enyl diphosphate binding. Histidine 125 is a dimethylallyl diphosphate binding site. Histidine 125 serves as a coordination point for isopentenyl diphosphate. Glutamate 127 serves as the catalytic Proton donor. Residue threonine 168 participates in (2E)-4-hydroxy-3-methylbut-2-enyl diphosphate binding. Cysteine 225 contributes to the [4Fe-4S] cluster binding site. Residues serine 253, serine 254, asparagine 255, and serine 302 each coordinate (2E)-4-hydroxy-3-methylbut-2-enyl diphosphate. 4 residues coordinate dimethylallyl diphosphate: serine 253, serine 254, asparagine 255, and serine 302. Isopentenyl diphosphate is bound by residues serine 253, serine 254, asparagine 255, and serine 302.

This sequence belongs to the IspH family. [4Fe-4S] cluster is required as a cofactor.

It carries out the reaction isopentenyl diphosphate + 2 oxidized [2Fe-2S]-[ferredoxin] + H2O = (2E)-4-hydroxy-3-methylbut-2-enyl diphosphate + 2 reduced [2Fe-2S]-[ferredoxin] + 2 H(+). The catalysed reaction is dimethylallyl diphosphate + 2 oxidized [2Fe-2S]-[ferredoxin] + H2O = (2E)-4-hydroxy-3-methylbut-2-enyl diphosphate + 2 reduced [2Fe-2S]-[ferredoxin] + 2 H(+). Its pathway is isoprenoid biosynthesis; dimethylallyl diphosphate biosynthesis; dimethylallyl diphosphate from (2E)-4-hydroxy-3-methylbutenyl diphosphate: step 1/1. The protein operates within isoprenoid biosynthesis; isopentenyl diphosphate biosynthesis via DXP pathway; isopentenyl diphosphate from 1-deoxy-D-xylulose 5-phosphate: step 6/6. Catalyzes the conversion of 1-hydroxy-2-methyl-2-(E)-butenyl 4-diphosphate (HMBPP) into a mixture of isopentenyl diphosphate (IPP) and dimethylallyl diphosphate (DMAPP). Acts in the terminal step of the DOXP/MEP pathway for isoprenoid precursor biosynthesis. In Chlorobium chlorochromatii (strain CaD3), this protein is 4-hydroxy-3-methylbut-2-enyl diphosphate reductase.